The sequence spans 593 residues: Aspartate--tRNA ligase (593 aa).

Residue Glu-180 coordinates L-aspartate. The interval 204 to 207 (QIFK) is aspartate. Arg-226 is a binding site for L-aspartate. Residues 226 to 228 (RDE) and Gln-235 each bind ATP. His-453 contributes to the L-aspartate binding site. Glu-487 provides a ligand contact to ATP. Arg-494 is an L-aspartate binding site. 539–542 (GLDR) is a binding site for ATP.

Belongs to the class-II aminoacyl-tRNA synthetase family. Type 1 subfamily. In terms of assembly, homodimer.

Its subcellular location is the cytoplasm. The catalysed reaction is tRNA(Asp) + L-aspartate + ATP = L-aspartyl-tRNA(Asp) + AMP + diphosphate. Functionally, catalyzes the attachment of L-aspartate to tRNA(Asp) in a two-step reaction: L-aspartate is first activated by ATP to form Asp-AMP and then transferred to the acceptor end of tRNA(Asp). This is Aspartate--tRNA ligase from Clostridium botulinum (strain 657 / Type Ba4).